We begin with the raw amino-acid sequence, 842 residues long: Type VI secretion system spike protein VgrG2a (842 aa).

Residues 265 to 291 (RSGAGRPFSESRLRGHRRDARVASVSG) form a disordered region.

This sequence belongs to the VgrG protein family.

Part of the H2 type VI secretion system (H2-T6SS) specialized secretion system, which delivers several virulence factors in both prokaryotic and eukaryotic cells during infection. May form the spike at the tip of the elongating tube formed by haemolysin co-regulated protein 2a/Hcp2a. In turn, may allow the delivery of the Tle4 antibacterial toxin to target cells where it exerts its toxicity. Also promotes the release of VgrG2b toxin to the host cell. This Pseudomonas aeruginosa (strain ATCC 15692 / DSM 22644 / CIP 104116 / JCM 14847 / LMG 12228 / 1C / PRS 101 / PAO1) protein is Type VI secretion system spike protein VgrG2a.